The primary structure comprises 559 residues: MNNLGNFGVWGFGFFSLSIWFAVLQQANGLRPIRETARSWGDEWLFGKKEKGGAGPFSAWNITGTYRGTWKFLDTVNSSSKFPDFRKESGNSVIELVTSPTKITGVHYVQGAVVFHDVFDNEHNVGGAQIKVEGVYIWPFRQLRLVANSGKKSDSGLEDDYLLSNPYHLLGIFSSQVFQESPRDRILKQKTSPIYEMEKHCNIEIAAQISQSTSSENNGDKDRYQIEGLMESPAVDDEVDCFSPLSLNATSINVEVYYNKAVNYTLMVTFVSFLQVLLLIRQMEHSNTQSGAAKVSIVMIGQQAIMDSYLCLLHLTAGILVESLFNAFATAAFFKFVVFSIFEMRYLLSIWKATRPSTSGEGWETMRRELSFLYSRFYGILLGGILLMYEFHNYMRPILLLMYSFWIPQIVANVVRDSRKPLHPYYILGMTVTRLAIPLYVFGCPKNFMRVEPSKAWCVSLCAFMGFQAGVLLLQHYFGSRCFVPRKLLPEKYSYYRRLDHNVNRSRDCVICMTTIDLRHRINDCMVTPCEHIFHSGCLQRWMDIKMECPTCRRPLPPA.

Positions 1–29 (MNNLGNFGVWGFGFFSLSIWFAVLQQANG) are cleaved as a signal peptide. Over 30–259 (LRPIRETARS…TSINVEVYYN (230 aa)) the chain is Lumenal. A helical membrane pass occupies residues 260–280 (KAVNYTLMVTFVSFLQVLLLI). Residues 281 to 294 (RQMEHSNTQSGAAK) are Cytoplasmic-facing. A helical membrane pass occupies residues 295–315 (VSIVMIGQQAIMDSYLCLLHL). At 316 to 318 (TAG) the chain is on the lumenal side. A helical membrane pass occupies residues 319 to 339 (ILVESLFNAFATAAFFKFVVF). At 340–370 (SIFEMRYLLSIWKATRPSTSGEGWETMRREL) the chain is on the cytoplasmic side. The helical transmembrane segment at 371–391 (SFLYSRFYGILLGGILLMYEF) threads the bilayer. Residues 392–394 (HNY) are Lumenal-facing. Residues 395-415 (MRPILLLMYSFWIPQIVANVV) traverse the membrane as a helical segment. Over 416–423 (RDSRKPLH) the chain is Cytoplasmic. A helical membrane pass occupies residues 424 to 444 (PYYILGMTVTRLAIPLYVFGC). Topologically, residues 445–458 (PKNFMRVEPSKAWC) are lumenal. The chain crosses the membrane as a helical span at residues 459–479 (VSLCAFMGFQAGVLLLQHYFG). Residues 480–559 (SRCFVPRKLL…PTCRRPLPPA (80 aa)) lie on the Cytoplasmic side of the membrane. Residues 509–553 (CVICMTTIDLRHRINDCMVTPCEHIFHSGCLQRWMDIKMECPTCR) form an RING-type; atypical zinc finger.

As to expression, highly expressed in stems. Expressed in root xylem and seed coat.

Its subcellular location is the endomembrane system. The enzyme catalyses S-ubiquitinyl-[E2 ubiquitin-conjugating enzyme]-L-cysteine + [acceptor protein]-L-lysine = [E2 ubiquitin-conjugating enzyme]-L-cysteine + N(6)-ubiquitinyl-[acceptor protein]-L-lysine.. The protein operates within protein modification; protein ubiquitination. E3 ubiquitin-protein ligase that may be involved in xylem development. This chain is Transmembrane E3 ubiquitin-protein ligase FLY2, found in Arabidopsis thaliana (Mouse-ear cress).